The primary structure comprises 428 residues: Glutamyl-tRNA reductase (428 aa).

Residues 49–52 (TCNR), serine 109, 114–116 (EGQ), and glutamine 120 each bind substrate. Residue cysteine 50 is the Nucleophile of the active site. 189–194 (GAGKMS) provides a ligand contact to NADP(+).

The protein belongs to the glutamyl-tRNA reductase family. As to quaternary structure, homodimer.

It catalyses the reaction (S)-4-amino-5-oxopentanoate + tRNA(Glu) + NADP(+) = L-glutamyl-tRNA(Glu) + NADPH + H(+). It functions in the pathway porphyrin-containing compound metabolism; protoporphyrin-IX biosynthesis; 5-aminolevulinate from L-glutamyl-tRNA(Glu): step 1/2. Its pathway is porphyrin-containing compound metabolism; chlorophyll biosynthesis. Its function is as follows. Catalyzes the NADPH-dependent reduction of glutamyl-tRNA(Glu) to glutamate 1-semialdehyde (GSA). In Microcystis aeruginosa (strain NIES-843 / IAM M-2473), this protein is Glutamyl-tRNA reductase.